The chain runs to 368 residues: Histone macroH2A1.1 (368 aa).

A disordered region spans residues 154 to 177; it reads AVSSSSAAASSSSSASSSSSVAPK. Residues 184 to 368 form the Macro domain; the sequence is TILSKKTLHL…VYNAELINTN (185 aa). 10 residues coordinate a glycoprotein: aspartate 203, leucine 204, glutamine 225, valine 226, serine 275, glycine 313, serine 314, glycine 315, asparagine 316, and asparagine 317.

Belongs to the histone H2A family. As to quaternary structure, the nucleosome is a histone octamer containing two molecules each of H2A, H2B, H3 and H4 assembled in one H3-H4 heterotetramer and two H2A-H2B heterodimers.

It localises to the nucleus. It is found in the chromosome. Variant histone H2A which replaces conventional H2A in a subset of nucleosomes where it represses transcription. Nucleosomes wrap and compact DNA into chromatin, limiting DNA accessibility to the cellular machineries which require DNA as a template. Histones thereby play a central role in transcription regulation, DNA repair, DNA replication and chromosomal stability. DNA accessibility is regulated via a complex set of post-translational modifications of histones, also called histone code, and nucleosome remodeling. In terms of biological role, specifically binds poly-ADP-ribose and plays a key role in NAD(+) metabolism. Able to bind to the ends of poly-ADP-ribose chains created by PARP1 and cap them. This prevents PARP1 from further addition of ADP-ribose and thus limits the consumption of nuclear NAD(+), allowing the cell to maintain proper NAD(+) levels in both the nucleus and the mitochondria to promote proper mitochondrial respiration. In Capsaspora owczarzaki (strain ATCC 30864), this protein is Histone macroH2A1.1.